Here is a 1397-residue protein sequence, read N- to C-terminus: Probable cyclin-dependent serine/threonine-protein kinase DDB_G0292550 (1397 aa).

In terms of domain architecture, Protein kinase spans 4–287; sequence FQIIELIGSG…TKEALNHPWF (284 aa). ATP is bound by residues 10–18 and lysine 33; that span reads IGSGSYGKV. The active-site Proton acceptor is aspartate 124. Disordered regions lie at residues 412–567, 671–728, 763–831, 845–949, 996–1101, 1115–1174, 1227–1324, and 1340–1397; these read NNNN…NNNN, PLSI…NNGF, NEMG…NGNN, NNNN…YANH, NGLA…NTHN, NNGF…NSPV, NSAS…SFGL, and KKKK…IVLD. Positions 676 to 715 are enriched in low complexity; that stretch reads SQHHNTSSSDTHNNNNNNYNNNNNNNNNINNNNINSIHNQ. 4 stretches are compositionally biased toward low complexity: residues 845–941, 1012–1021, 1028–1101, and 1115–1155; these read NNNN…NGNG, NSNNNNSGNN, NTFN…NTHN, and NNGF…TKNN. Positions 1156–1171 are enriched in polar residues; the sequence is TQFGPNILSSTQTSHN. Low complexity-rich tracts occupy residues 1253–1321 and 1354–1380; these read NNNN…NNNS and SSSQ…SQTQ.

It belongs to the protein kinase superfamily. CMGC Ser/Thr protein kinase family. CDC2/CDKX subfamily.

The enzyme catalyses L-seryl-[protein] + ATP = O-phospho-L-seryl-[protein] + ADP + H(+). It catalyses the reaction L-threonyl-[protein] + ATP = O-phospho-L-threonyl-[protein] + ADP + H(+). This Dictyostelium discoideum (Social amoeba) protein is Probable cyclin-dependent serine/threonine-protein kinase DDB_G0292550.